A 290-amino-acid polypeptide reads, in one-letter code: Probable ATP-dependent kinase TDA10 (290 aa).

38–45 contributes to the ATP binding site; it reads GPQGSGKS.

It belongs to the GLYK kinase family.

It localises to the cytoplasm. The protein localises to the nucleus. Its function is as follows. ATP-dependent kinase whose specificity is not yet known. The sequence is that of Probable ATP-dependent kinase TDA10 (TDA10) from Saccharomyces cerevisiae (strain ATCC 204508 / S288c) (Baker's yeast).